The primary structure comprises 158 residues: Inorganic pyrophosphatase (158 aa).

E8 is a binding site for Mg(2+). K16, R30, and Y42 together coordinate substrate. Residues D52, D57, D84, and D89 each contribute to the Mg(2+) site. D89 acts as the Proton acceptor in catalysis. Y125 lines the substrate pocket.

It belongs to the PPase family. As to quaternary structure, homohexamer. The cofactor is Mg(2+).

The protein localises to the cytoplasm. The catalysed reaction is diphosphate + H2O = 2 phosphate + H(+). Functionally, catalyzes the hydrolysis of inorganic pyrophosphate (PPi) forming two phosphate ions. This is Inorganic pyrophosphatase from Corynebacterium efficiens (strain DSM 44549 / YS-314 / AJ 12310 / JCM 11189 / NBRC 100395).